Consider the following 230-residue polypeptide: uncharacterized protein (230 aa).

A helical membrane pass occupies residues Ala-17 to Ile-37. N-linked (GlcNAc...) asparagine glycosylation occurs at Asn-126.

It is found in the membrane. This is an uncharacterized protein from Mus musculus (Mouse).